Reading from the N-terminus, the 373-residue chain is Caspase-4 (373 aa).

The required for LPS-binding stretch occupies residues methionine 1–aspartate 59. A propeptide spanning residues methionine 1–aspartate 80 is cleaved from the precursor. A CARD domain is found at methionine 1–glutamate 91. Position 83 is a phosphoserine (serine 83). Catalysis depends on residues histidine 206 and cysteine 254. The propeptide occupies serine 267–aspartate 285. At arginine 310 the chain carries (Microbial infection) ADP-riboxanated arginine.

This sequence belongs to the peptidase C14A family. In terms of assembly, heterotetramer that consists of two anti-parallel arranged heterodimers, each one formed by a 20 kDa (Caspase-4 subunit p20) and a 10 kDa (Caspase-4 subunit p10) subunit. Upon direct LPS-binding, forms large homooligomers, resulting in its activation. These oligomers are often referred to as 'non-canonical inflammasomes'. In its precursor form, interacts with TMEM214; this interaction is required for association with the endoplasmic reticulum membrane. Interacts with CASP1. Interacts with NOD2. Interacts with Serpinb1a, Serpinb1b and Serpinb1c; these interactions regulate CASP4 activity. Heterotetramer that consists of two anti-parallel arranged heterodimers, each one formed by a 20 kDa (Caspase-4 subunit p20) and a 10 kDa (Caspase-4 subunit p10) subunit. Post-translationally, in response to activation signals, undergoes autoproteolytic cleavage and activation. (Microbial infection) ADP-riboxanation by S.flexneri OspC3 blocks CASP4 autoprocessing, preventing CASP4 activation and ability to recognize and cleave GSDMD, thereby thwarting the inflammasome/pyroptosis-mediated defense. In terms of tissue distribution, widely expressed, including in thymus, lung and spleen (at protein level). Very low levels, if any, in the brain.

Its subcellular location is the cytoplasm. The protein resides in the cytosol. The protein localises to the endoplasmic reticulum membrane. It is found in the mitochondrion. It localises to the inflammasome. Its subcellular location is the secreted. It catalyses the reaction Strict requirement for Asp at the P1 position and has a preferred cleavage sequence of (Ile/Leu/Val/Phe)-Gly-His-Asp-|-.. Activated by homooligomerization induced by direct binding to cytosolic LPS, in a TLR4-independent manner. In addition to LPS, CASP4/CASP11 may also be activated by oxidized phospholipid 1-palmitoyl-2-arachidonoyl- sn-glycero-3-phosphorylcholine, an oxidized phospholipid (oxPAPC), in dendritic cells, promoting adaptive immunity. The role of oxPAPC is however unclear and another report suggests that oxPAPC competes with LPS-binding and inhibits the non-canonical inflammasome in macrophages. In terms of biological role, inflammatory caspase that acts as the effector of the non-canonical inflammasome by mediating lipopolysaccharide (LPS)-induced pyroptosis. Also indirectly activates the NLRP3 and NLRP6 inflammasomes. Acts as a thiol protease that cleaves a tetrapeptide after an Asp residue at position P1: catalyzes cleavage of CGAS and GSDMD. In contrast to its human ortholog, does not cleave IL18. Effector of the non-canonical inflammasome independently of NLRP3 inflammasome and CASP1: the non-canonical inflammasome promotes pyroptosis through GSDMD cleavage without involving secretion of cytokine IL1B and IL18. In the non-canonical inflammasome, CASP4/CASP11 is activated by direct binding to the lipid A moiety of LPS without the need of an upstream sensor. LPS-binding promotes CASP4/CASP11 activation and CASP4/CASP11-mediated cleavage of GSDMD, followed by pyroptosis of infected cells and their extrusion into the gut lumen. Also indirectly promotes secretion of mature cytokines (IL1A, IL18 and HMGB1) downstream of GSDMD-mediated pyroptosis via activation of the NLRP3 and NLRP6 inflammasomes. Involved in NLRP3-dependent CASP1 activation and IL1B and IL18 secretion in response to non-canonical activators, such as UVB radiation or cholera enterotoxin. Involved in NLRP6 inflammasome-dependent activation in response to lipoteichoic acid (LTA), a cell-wall component of Gram-positive bacteria, which leads to CASP1 activation and IL1B and IL18 secretion. Involved in LPS-induced IL6 secretion; this activity may not require caspase enzymatic activity. The non-canonical inflammasome is required for innate immunity to cytosolic, but not vacuolar, bacteria. Plays a crucial role in the restriction of S.typhimurium replication in colonic epithelial cells during infection. Activation of the non-canonical inflammasome in brain endothelial cells can lead to excessive pyroptosis, leading to blood-brain barrier breakdown. Pyroptosis limits bacterial replication, while cytokine secretion promotes the recruitment and activation of immune cells and triggers mucosal inflammation. May also act as an activator of adaptive immunity in dendritic cells, following activation by oxidized phospholipid 1-palmitoyl-2-arachidonoyl- sn-glycero-3-phosphorylcholine, an oxidized phospholipid (oxPAPC). Cleavage of GSDMD is not strictly dependent on the consensus cleavage site but depends on an exosite interface on CASP4/CASP11 that recognizes and binds the Gasdermin-D, C-terminal (GSDMD-CT) part. In contrast, it does not directly process IL1B. During non-canonical inflammasome activation, cuts CGAS and may play a role in the regulation of antiviral innate immune activation. This chain is Caspase-4, found in Mus musculus (Mouse).